Consider the following 264-residue polypeptide: Thymidylate synthase (264 aa).

Residue Arg-21 coordinates dUMP. His-51 is a (6R)-5,10-methylene-5,6,7,8-tetrahydrofolate binding site. Residue 126–127 (RR) participates in dUMP binding. The active-site Nucleophile is Cys-146. DUMP-binding positions include 166–169 (RSAD), Asn-177, and 207–209 (HLY). A (6R)-5,10-methylene-5,6,7,8-tetrahydrofolate-binding site is contributed by Asp-169. Ser-263 serves as a coordination point for (6R)-5,10-methylene-5,6,7,8-tetrahydrofolate.

Belongs to the thymidylate synthase family. Bacterial-type ThyA subfamily. As to quaternary structure, homodimer.

The protein resides in the cytoplasm. It catalyses the reaction dUMP + (6R)-5,10-methylene-5,6,7,8-tetrahydrofolate = 7,8-dihydrofolate + dTMP. It functions in the pathway pyrimidine metabolism; dTTP biosynthesis. In terms of biological role, catalyzes the reductive methylation of 2'-deoxyuridine-5'-monophosphate (dUMP) to 2'-deoxythymidine-5'-monophosphate (dTMP) while utilizing 5,10-methylenetetrahydrofolate (mTHF) as the methyl donor and reductant in the reaction, yielding dihydrofolate (DHF) as a by-product. This enzymatic reaction provides an intracellular de novo source of dTMP, an essential precursor for DNA biosynthesis. This Nitrosococcus oceani (strain ATCC 19707 / BCRC 17464 / JCM 30415 / NCIMB 11848 / C-107) protein is Thymidylate synthase.